Consider the following 202-residue polypeptide: Small ribosomal subunit protein uS4c (202 aa).

One can recognise an S4 RNA-binding domain in the interval 90 to 158; that stretch reads MRSDNVIFRL…ISKNIELYQK (69 aa).

Belongs to the universal ribosomal protein uS4 family. Part of the 30S ribosomal subunit. Contacts protein S5. The interaction surface between S4 and S5 is involved in control of translational fidelity.

Its subcellular location is the plastid. It is found in the chloroplast. Functionally, one of the primary rRNA binding proteins, it binds directly to 16S rRNA where it nucleates assembly of the body of the 30S subunit. With S5 and S12 plays an important role in translational accuracy. This Anthoceros punctatus (Hornwort) protein is Small ribosomal subunit protein uS4c (rps4).